The following is a 324-amino-acid chain: Malate dehydrogenase (324 aa).

Residues G7–G13 and D34 contribute to the NAD(+) site. The substrate site is built by R88 and R94. Residues N101 and V124 to N126 each bind NAD(+). Substrate is bound by residues N126 and R160. H184 serves as the catalytic Proton acceptor. NAD(+) is bound at residue M238.

The protein belongs to the LDH/MDH superfamily. MDH type 1 family. As to quaternary structure, homodimer.

It carries out the reaction (S)-malate + NAD(+) = oxaloacetate + NADH + H(+). Catalyzes the reversible oxidation of malate to oxaloacetate. This chain is Malate dehydrogenase, found in Haemophilus ducreyi (strain 35000HP / ATCC 700724).